Here is a 409-residue protein sequence, read N- to C-terminus: Peptidase T (409 aa).

Zn(2+) is bound at residue His-78. Asp-80 is a catalytic residue. Position 140 (Asp-140) interacts with Zn(2+). Catalysis depends on Glu-173, which acts as the Proton acceptor. Zn(2+)-binding residues include Glu-174, Asp-196, and His-379.

It belongs to the peptidase M20B family. Zn(2+) serves as cofactor.

Its subcellular location is the cytoplasm. The catalysed reaction is Release of the N-terminal residue from a tripeptide.. Functionally, cleaves the N-terminal amino acid of tripeptides. The chain is Peptidase T from Escherichia coli (strain SE11).